We begin with the raw amino-acid sequence, 84 residues long: Small ribosomal subunit protein uS17c (84 aa).

Belongs to the universal ribosomal protein uS17 family. Part of the 30S ribosomal subunit.

Its subcellular location is the plastid. The protein localises to the chloroplast. Its function is as follows. One of the primary rRNA binding proteins, it binds specifically to the 5'-end of 16S ribosomal RNA. This is Small ribosomal subunit protein uS17c (rps17) from Thalassiosira pseudonana (Marine diatom).